The sequence spans 367 residues: Probable peptidoglycan glycosyltransferase FtsW (367 aa).

Over 1-8 (MRRVEGYD) the chain is Cytoplasmic. The chain crosses the membrane as a helical span at residues 9–29 (MIVLMMAVILTCFGVVMVYSA). Over 30-49 (SSVMAAKKFHDGFFFLKRQS) the chain is Periplasmic. A helical transmembrane segment spans residues 50-70 (LYALIGFIGMGVAMHVDYHVW). The Cytoplasmic segment spans residues 71–72 (KK). A helical membrane pass occupies residues 73 to 93 (WAVPLFLGTFFLLLLVFVPGI). Residues 94 to 138 (GGTAKGASRWIRLPGFNFQPSELAKVALIMYMAYSLEKRQDKLKQ) are Periplasmic-facing. Residues 139-159 (FMSGFFPYMLILGVFIAVLLA) traverse the membrane as a helical segment. The Cytoplasmic segment spans residues 160–161 (QH). Residues 162 to 182 (DMGAALTMLAVAIVMLFAAGT) traverse the membrane as a helical segment. Lys-183 is a topological domain (periplasmic). Residues 184–204 (VQYILGMGLVALPGICYLVFT) form a helical membrane-spanning segment. The Cytoplasmic segment spans residues 205–225 (KAYRMRRITAFLDPWQDPTDA). The chain crosses the membrane as a helical span at residues 226 to 246 (GFQIIQSWLALGTGGFFGQGL). Topologically, residues 247–266 (GEGKQKLFYLPEAHTDFILS) are periplasmic. A helical transmembrane segment spans residues 267-287 (VLGEEMGFIGVVVIASMFLLL). Residues 288–304 (VQRSIRVAIAAEDSFGR) lie on the Cytoplasmic side of the membrane. The helical transmembrane segment at 305 to 325 (FLAFGIAILLGLEAFVNMAVV) threads the bilayer. Over 326 to 335 (TGLLPTKGIA) the chain is Periplasmic. The helical transmembrane segment at 336-356 (LPFLSYGGSSLIISLCSVGVL) threads the bilayer. Residues 357 to 367 (LNVSTRMRGAA) lie on the Cytoplasmic side of the membrane.

Belongs to the SEDS family. FtsW subfamily.

The protein localises to the cell inner membrane. The catalysed reaction is [GlcNAc-(1-&gt;4)-Mur2Ac(oyl-L-Ala-gamma-D-Glu-L-Lys-D-Ala-D-Ala)](n)-di-trans,octa-cis-undecaprenyl diphosphate + beta-D-GlcNAc-(1-&gt;4)-Mur2Ac(oyl-L-Ala-gamma-D-Glu-L-Lys-D-Ala-D-Ala)-di-trans,octa-cis-undecaprenyl diphosphate = [GlcNAc-(1-&gt;4)-Mur2Ac(oyl-L-Ala-gamma-D-Glu-L-Lys-D-Ala-D-Ala)](n+1)-di-trans,octa-cis-undecaprenyl diphosphate + di-trans,octa-cis-undecaprenyl diphosphate + H(+). It functions in the pathway cell wall biogenesis; peptidoglycan biosynthesis. In terms of biological role, peptidoglycan polymerase that is essential for cell division. The chain is Probable peptidoglycan glycosyltransferase FtsW from Geobacter sp. (strain M18).